We begin with the raw amino-acid sequence, 484 residues long: Xylulose kinase (484 aa).

77 to 78 (MH) lines the substrate pocket. The active-site Proton acceptor is D233.

The protein belongs to the FGGY kinase family. Homodimer.

The enzyme catalyses D-xylulose + ATP = D-xylulose 5-phosphate + ADP + H(+). The catalysed reaction is 1-deoxy-D-xylulose + ATP = 1-deoxy-D-xylulose 5-phosphate + ADP + H(+). With respect to regulation, sugar binding is accompanied by a dramatic hinge-bending movement that enhances interactions with Mg-ATP. Its function is as follows. Catalyzes the phosphorylation of D-xylulose to D-xylulose 5-phosphate. Also catalyzes the phosphorylation of 1-deoxy-D-xylulose to 1-deoxy-D-xylulose 5-phosphate, with lower efficiency. Can also use D-ribulose, xylitol and D-arabitol, but D-xylulose is preferred over the other substrates. Has a weak substrate-independent Mg-ATP-hydrolyzing activity. This Escherichia coli (strain K12) protein is Xylulose kinase.